A 492-amino-acid chain; its full sequence is N-succinylglutamate 5-semialdehyde dehydrogenase (492 aa).

220–225 provides a ligand contact to NAD(+); that stretch reads GSASTG. Residues E243 and C277 contribute to the active site.

The protein belongs to the aldehyde dehydrogenase family. AstD subfamily.

The enzyme catalyses N-succinyl-L-glutamate 5-semialdehyde + NAD(+) + H2O = N-succinyl-L-glutamate + NADH + 2 H(+). It functions in the pathway amino-acid degradation; L-arginine degradation via AST pathway; L-glutamate and succinate from L-arginine: step 4/5. Functionally, catalyzes the NAD-dependent reduction of succinylglutamate semialdehyde into succinylglutamate. This Salmonella gallinarum (strain 287/91 / NCTC 13346) protein is N-succinylglutamate 5-semialdehyde dehydrogenase.